A 436-amino-acid polypeptide reads, in one-letter code: Magnesium transporter MRS2-B (436 aa).

Composition is skewed to low complexity over residues 1 to 14 and 29 to 54; these read MSAAAASSAAGDSA and VASVSSPSLPSAPPGALAGGRRFPGG. Residues 1 to 60 form a disordered region; the sequence is MSAAAASSAAGDSAKQPLLHHQRGNPPHVASVSSPSLPSAPPGALAGGRRFPGGLDVPNL. A coiled-coil region spans residues 176–242; it reads LALEAACSFL…RDEIEQLMDD (67 aa). The next 2 helical transmembrane spans lie at 372-392 and 408-428; these read LLLTTATFVVAIFGVVAGIFG and WVLIITGVIGAFIFCGFLWFF. Residues 392-394 carry the Required for magnesium transport activity motif; the sequence is GMN.

The protein belongs to the CorA metal ion transporter (MIT) (TC 1.A.35.5) family.

Its subcellular location is the membrane. In terms of biological role, magnesium transporter that may mediate the influx of magnesium. This Oryza sativa subsp. indica (Rice) protein is Magnesium transporter MRS2-B (MRS2-B).